The chain runs to 942 residues: Protein inturned (942 aa).

Residues 1–52 are disordered; the sequence is MASVASCDSRPSSDELPGDPSSQEEDEDYDFEDRVSDSGSYSSASSDYDDLE. Residues 22 to 31 show a composition bias toward acidic residues; sequence SQEEDEDYDF. Low complexity predominate over residues 37 to 46; sequence DSGSYSSASS. Residues 185-263 form the PDZ domain; the sequence is LVGIIHQTKW…PMQVKLTFEN (79 aa). Residues S670 and S674 each carry the phosphoserine modification. The segment at 704 to 754 is disordered; that stretch reads TRKPSPSCSSGGSDNGCEGGEDDGFSPHTTPDAVRKQRESQGSDGLEESGT.

This sequence belongs to the inturned family. In terms of assembly, component of the CPLANE (ciliogenesis and planar polarity effectors) complex, composed of INTU, FUZ and WDPCP. Interacts with CPLANE1. Interacts with NPHP4 and DAAM1; INTU is mediating the interaction between NPHP4 and DAAM1.

It is found in the cytoplasm. It localises to the cell surface. Its subcellular location is the cytoskeleton. The protein resides in the cilium basal body. The protein localises to the microtubule organizing center. It is found in the centrosome. It localises to the centriole. Its function is as follows. Plays a key role in ciliogenesis and embryonic development. Regulator of cilia formation by controlling the organization of the apical actin cytoskeleton and the positioning of the basal bodies at the apical cell surface, which in turn is essential for the normal orientation of elongating ciliary microtubules. Plays a key role in definition of cell polarity via its role in ciliogenesis but not via conversion extension. Has an indirect effect on hedgehog signaling. Proposed to function as core component of the CPLANE (ciliogenesis and planar polarity effectors) complex involved in the recruitment of peripheral IFT-A proteins to basal bodies. Required for recruitment of CPLANE2 to the mother centriole. Binds phosphatidylinositol 3-phosphate with highest affinity, followed by phosphatidylinositol 4-phosphate and phosphatidylinositol 5-phosphate. In Homo sapiens (Human), this protein is Protein inturned (INTU).